The sequence spans 276 residues: Large ribosomal subunit protein uL2 (276 aa).

Residues 224–276 are disordered; it reads AMNPIDHPHGGGEGKTSGGRNPVTPWGVSTKGKKTRKKNKSSNKYIKRVSDKG. Residues 254 to 270 are compositionally biased toward basic residues; sequence KGKKTRKKNKSSNKYIK.

This sequence belongs to the universal ribosomal protein uL2 family. As to quaternary structure, part of the 50S ribosomal subunit. Forms a bridge to the 30S subunit in the 70S ribosome.

One of the primary rRNA binding proteins. Required for association of the 30S and 50S subunits to form the 70S ribosome, for tRNA binding and peptide bond formation. It has been suggested to have peptidyltransferase activity; this is somewhat controversial. Makes several contacts with the 16S rRNA in the 70S ribosome. This is Large ribosomal subunit protein uL2 from Ehrlichia ruminantium (strain Gardel).